A 338-amino-acid polypeptide reads, in one-letter code: Methionine import ATP-binding protein MetN 2 (338 aa).

Positions 2-242 (IEIEKVCVDF…PQHAFTQQLV (241 aa)) constitute an ABC transporter domain. Residue 39-46 (GTSGAGKS) coordinates ATP.

This sequence belongs to the ABC transporter superfamily. Methionine importer (TC 3.A.1.24) family. The complex is composed of two ATP-binding proteins (MetN), two transmembrane proteins (MetI) and a solute-binding protein (MetQ).

The protein resides in the cell inner membrane. It carries out the reaction L-methionine(out) + ATP + H2O = L-methionine(in) + ADP + phosphate + H(+). The enzyme catalyses D-methionine(out) + ATP + H2O = D-methionine(in) + ADP + phosphate + H(+). Its function is as follows. Part of the ABC transporter complex MetNIQ involved in methionine import. Responsible for energy coupling to the transport system. This chain is Methionine import ATP-binding protein MetN 2, found in Salmonella paratyphi A (strain ATCC 9150 / SARB42).